We begin with the raw amino-acid sequence, 217 residues long: Pyridoxine/pyridoxamine 5'-phosphate oxidase (217 aa).

Substrate contacts are provided by residues 13–16 (RREY) and K71. Residues 66-71 (RIVLLK), 81-82 (YT), R87, K88, and Q110 contribute to the FMN site. 3 residues coordinate substrate: Y128, R132, and S136. FMN is bound by residues 145-146 (QS) and W190. 196 to 198 (RLH) is a binding site for substrate. An FMN-binding site is contributed by R200.

The protein belongs to the pyridoxamine 5'-phosphate oxidase family. Homodimer. FMN serves as cofactor.

The enzyme catalyses pyridoxamine 5'-phosphate + O2 + H2O = pyridoxal 5'-phosphate + H2O2 + NH4(+). The catalysed reaction is pyridoxine 5'-phosphate + O2 = pyridoxal 5'-phosphate + H2O2. Its pathway is cofactor metabolism; pyridoxal 5'-phosphate salvage; pyridoxal 5'-phosphate from pyridoxamine 5'-phosphate: step 1/1. The protein operates within cofactor metabolism; pyridoxal 5'-phosphate salvage; pyridoxal 5'-phosphate from pyridoxine 5'-phosphate: step 1/1. Catalyzes the oxidation of either pyridoxine 5'-phosphate (PNP) or pyridoxamine 5'-phosphate (PMP) into pyridoxal 5'-phosphate (PLP). The polypeptide is Pyridoxine/pyridoxamine 5'-phosphate oxidase (Yersinia pestis bv. Antiqua (strain Antiqua)).